Here is a 65-residue protein sequence, read N- to C-terminus: Large ribosomal subunit protein bL35 (65 aa).

The protein belongs to the bacterial ribosomal protein bL35 family.

This is Large ribosomal subunit protein bL35 from Alkalilimnicola ehrlichii (strain ATCC BAA-1101 / DSM 17681 / MLHE-1).